The following is a 97-amino-acid chain: Protein YukE (97 aa).

Residues 21–94 are a coiled coil; the sequence is VESQEVLNQV…ESTDQDIANQ (74 aa).

Belongs to the WXG100 family. sagEsxA-like subfamily. Homodimer.

It is found in the secreted. In terms of biological role, required to deliver LXG toxins to target cells. The polypeptide is Protein YukE (yukE) (Bacillus subtilis (strain 168)).